Reading from the N-terminus, the 123-residue chain is MTPASGATASLGRLRARPRSRWDAAYLPAVAAVCVARASHVPNGTLRFGVCKARRTMRPLPRRIEVRTKRGPQRPAAPERSPQPRLPPSRHPSRRGPRRHLSGCSAPACRIPTGCRCPCGRPS.

Positions Met57 to Ile111 are disordered. The segment covering His91–Leu101 has biased composition (basic residues).

The polypeptide is TYMS opposite strand protein (TYMSOS) (Homo sapiens (Human)).